The following is a 234-amino-acid chain: UPF0173 metal-dependent hydrolase R01310 (234 aa).

It belongs to the UPF0173 family.

The chain is UPF0173 metal-dependent hydrolase R01310 from Rhizobium meliloti (strain 1021) (Ensifer meliloti).